Consider the following 193-residue polypeptide: MGFSEHNLVWLDLEMTGLDPDTDRIIEIATLVTDSQLNILAEGPVLAVRQSEQALAAMDEWNTRTHGESGLIERVRASHLDEAAAEAETLAFLRRWVPERASPMCGNSICQDRRFLYRYMPRLEAWFHYRNLDVSTLKLLANRWHPEVLQGFSKKATHQALEDIRESVAELRHYRAHFLRLPAAGAEGGGAAD.

In terms of domain architecture, Exonuclease spans 8 to 171 (LVWLDLEMTG…EDIRESVAEL (164 aa)). The active site involves tyrosine 129.

It belongs to the oligoribonuclease family.

It localises to the cytoplasm. 3'-to-5' exoribonuclease specific for small oligoribonucleotides. The protein is Oligoribonuclease of Alkalilimnicola ehrlichii (strain ATCC BAA-1101 / DSM 17681 / MLHE-1).